Here is a 441-residue protein sequence, read N- to C-terminus: Proline--tRNA ligase (441 aa).

Belongs to the class-II aminoacyl-tRNA synthetase family. ProS type 2 subfamily. As to quaternary structure, homodimer.

The protein localises to the cytoplasm. It catalyses the reaction tRNA(Pro) + L-proline + ATP = L-prolyl-tRNA(Pro) + AMP + diphosphate. Functionally, catalyzes the attachment of proline to tRNA(Pro) in a two-step reaction: proline is first activated by ATP to form Pro-AMP and then transferred to the acceptor end of tRNA(Pro). The sequence is that of Proline--tRNA ligase from Afipia carboxidovorans (strain ATCC 49405 / DSM 1227 / KCTC 32145 / OM5) (Oligotropha carboxidovorans).